A 730-amino-acid polypeptide reads, in one-letter code: Cyclin-T2 (730 aa).

The tract at residues 1 to 300 (MASGRGASSR…SVTGVPTNPS (300 aa)) is interaction with MDFIC and MDFI. Residues 12-147 (FFTREQLENT…IMLQTLGFEI (136 aa)) form the Cyclin N-terminal domain. Residues 250–300 (RLKKIRNWRANQAARKPKVDGQVSETPLLGSSLVQNSILVDSVTGVPTNPS) are interaction with POLR2A. Polar residues-rich tracts occupy residues 341-350 (TSYGLSSHQE) and 360-389 (TEQL…SISL). The tract at residues 341 to 430 (TSYGLSSHQE…GPISTTPGII (90 aa)) is disordered. Positions 398–412 (DKISDHSSVKQEYTH) are enriched in basic and acidic residues. A Glycyl lysine isopeptide (Lys-Gly) (interchain with G-Cter in SUMO2) cross-link involves residue lysine 407. Position 480 is a phosphoserine (serine 480). Positions 497–652 (DKKEKSGSLK…SSSSSSSSVK (156 aa)) are disordered. 2 stretches are compositionally biased toward basic and acidic residues: residues 517-543 (SASK…EGSG) and 552-565 (ISRD…EHPS). A compositionally biased stretch (basic residues) spans 566–578 (SRHHTSSHKHSHS). The span at 579-588 (HSGSSSGGSK) shows a compositional bias: low complexity. Serine 601 bears the Phosphoserine mark. 2 stretches are compositionally biased toward low complexity: residues 606–616 (SSDGISSSSSS) and 637–652 (SSKS…SSVK).

It belongs to the cyclin family. Cyclin C subfamily. As to quaternary structure, interacts with CDK9 to form P-TEFb. Interacts with POLR2A (via the C-terminal domain (CTD)); mediates transcriptional activity. Interacts with HEXIM1; mediates formation of a tripartite complex with KPNA2. Interacts with HEXIM2. Interacts with PKN1; enhances MYOD1-dependent transcription. P-TEFB complex interacts with RB1; promotes phosphorylation of RB1. P-TEFB complex interacts with MYOD1; promotes the transcriptional activity of MYOD1 through its CDK9-mediated phosphorylation. Interacts with MDFI and MDFIC. Interacts with MON1B; down-regulates CCNT2-mediated activation of viral promoters during herpes simplex virus 1/HHV-1 infection. In terms of assembly, (Microbial infection) Interacts with HIV-2 and SIV Tat. Does not bind efficiently to the transactivation domain of the HIV-1 Tat. Ubiquitously expressed.

The protein localises to the cytoplasm. The protein resides in the perinuclear region. Its subcellular location is the nucleus. Its function is as follows. Regulatory subunit of the cyclin-dependent kinase pair (CDK9/cyclin T) complex, also called positive transcription elongation factor B (P-TEFB), which is proposed to facilitate the transition from abortive to production elongation by phosphorylating the CTD (carboxy-terminal domain) of the large subunit of RNA polymerase II (RNAP II). The activity of this complex is regulated by binding with 7SK snRNA. Plays a role during muscle differentiation; P-TEFB complex interacts with MYOD1; this tripartite complex promotes the transcriptional activity of MYOD1 through its CDK9-mediated phosphorylation and binds the chromatin of promoters and enhancers of muscle-specific genes; this event correlates with hyperphosphorylation of the CTD domain of RNA pol II. In addition, enhances MYOD1-dependent transcription through interaction with PKN1. Involved in early embryo development. In terms of biological role, (Microbial infection) Promotes transcriptional activation of early and late herpes simplex virus 1/HHV-1 promoters. This Homo sapiens (Human) protein is Cyclin-T2.